Consider the following 217-residue polypeptide: Guanylate kinase (217 aa).

The Guanylate kinase-like domain occupies Gly10–Thr190. Residue Ser17–Ser24 participates in ATP binding.

The protein belongs to the guanylate kinase family.

It localises to the cytoplasm. The enzyme catalyses GMP + ATP = GDP + ADP. Essential for recycling GMP and indirectly, cGMP. The protein is Guanylate kinase of Ruegeria sp. (strain TM1040) (Silicibacter sp.).